The following is an 857-amino-acid chain: Mitogen-activated protein kinase kinase kinase dlk-1 (857 aa).

The region spanning Ile-62–Ile-304 is the Protein kinase domain. Residues Leu-68–Val-76 and Lys-89 contribute to the ATP site. Asp-173 acts as the Proton acceptor in catalysis. Disordered regions lie at residues Glu-441–Asn-503, Arg-572–Asn-625, Asn-733–Glu-775, and His-818–Ile-857. Residues Ser-467–Gln-488 are compositionally biased toward low complexity. Over residues Ala-609–Ser-623 the composition is skewed to polar residues. Positions Ala-753–Gly-762 are enriched in acidic residues. The segment covering Asn-763–Met-772 has biased composition (polar residues).

Belongs to the protein kinase superfamily. STE Ser/Thr protein kinase family. MAP kinase kinase kinase subfamily. Mg(2+) serves as cofactor. Post-translationally, ubiquitinated by rpm-1. Negatively regulated by ubiquitination by fsn-1 bound rpm-1, followed by degradation.

Its subcellular location is the synapse. It catalyses the reaction L-seryl-[protein] + ATP = O-phospho-L-seryl-[protein] + ADP + H(+). The enzyme catalyses L-threonyl-[protein] + ATP = O-phospho-L-threonyl-[protein] + ADP + H(+). Component of a MAP kinase pathway that functions presynaptically to regulate synaptic architecture and presynaptic differentiation. Phosphorylates and activates mkk-4. In Caenorhabditis briggsae, this protein is Mitogen-activated protein kinase kinase kinase dlk-1.